The chain runs to 226 residues: Large ribosomal subunit protein uL3 (226 aa).

Residues 135 to 158 (MSSQRASHGNSRSHNVPGSIGMAQ) form a disordered region. A compositionally biased stretch (polar residues) spans 137–150 (SQRASHGNSRSHNV). Gln158 is subject to N5-methylglutamine.

The protein belongs to the universal ribosomal protein uL3 family. Part of the 50S ribosomal subunit. Forms a cluster with proteins L14 and L19. Methylated by PrmB.

One of the primary rRNA binding proteins, it binds directly near the 3'-end of the 23S rRNA, where it nucleates assembly of the 50S subunit. In Polaromonas naphthalenivorans (strain CJ2), this protein is Large ribosomal subunit protein uL3.